The chain runs to 294 residues: 7,8-dihydropterin-6-methyl-4-(beta-D-ribofuranosyl)-aminobenzene-5'-phosphate synthase (294 aa).

Substrate-binding residues include Glu116, Asp186, Lys228, and His265.

Belongs to the metallo-beta-lactamase superfamily. Requires Mg(2+) as cofactor.

It catalyses the reaction 4-(beta-D-ribofuranosyl)aminobenzene 5'-phosphate + (7,8-dihydropterin-6-yl)methyl diphosphate = N-[(7,8-dihydropterin-6-yl)methyl]-4-(beta-D-ribofuranosyl)aniline 5'-phosphate + diphosphate. The protein operates within cofactor biosynthesis; 5,6,7,8-tetrahydromethanopterin biosynthesis. Functionally, catalyzes the condensation of 6-hydroxymethyl-7,8-dihydropterin pyrophosphate (DHPP) with 4-(beta-D-ribofuranosyl)-aminobenzene-5'-phosphate (beta-RFA-P) to form 7,8-dihydropterin-6-methyl-4-(beta-D-ribofuranosyl)-aminobenzene-5'-phosphate, a precursor in the biosynthesis of 5,6,7,8-tetrahydromethanopterin (H4MPT). To a lesser extent, is able to condense beta-RFA-P with another arylamine, 1-(4-aminophenyl)-1-deoxy-D-ribitol (APDR), to form 7,8-dihydropterin-6-methyl-1-(4-aminophenyl)-1-deoxy-D-ribitol. Dephosphorylated beta-RFA-P is not a substrate. This chain is 7,8-dihydropterin-6-methyl-4-(beta-D-ribofuranosyl)-aminobenzene-5'-phosphate synthase, found in Methanocaldococcus jannaschii (strain ATCC 43067 / DSM 2661 / JAL-1 / JCM 10045 / NBRC 100440) (Methanococcus jannaschii).